We begin with the raw amino-acid sequence, 159 residues long: Fatty acid-binding protein homolog 1 (159 aa).

The signal sequence occupies residues 1-17 (MCAKIALLLVLVGAASA).

This sequence belongs to the calycin superfamily. Fatty-acid binding protein (FABP) family. As to expression, first detected in hypodermal precursor cells at the time of gastrulation. From the two-fold stage through to three-fold stages, expression is localized exclusively to hyp-7 but disappears in newly hatched L1s and subsequent developmental stages. Expression from L1 to adult stages is found in a single neuron in the ventral cord with a process into the nerve ring.

Its subcellular location is the secreted. Functionally, may play a role in sequestering potentially toxic fatty acids and their peroxidation products, or it may be involved in the maintenance of the impermeable lipid layer of the eggshell. This is Fatty acid-binding protein homolog 1 (lbp-1) from Caenorhabditis elegans.